The chain runs to 708 residues: Outer capsid protein mu-1 (708 aa).

Gly2 is lipidated: N-myristoyl glycine; by host. 8 N-linked (GlcNAc...) asparagine; by host glycosylation sites follow: Asn3, Asn12, Asn81, Asn110, Asn458, Asn482, Asn528, and Asn659. The tract at residues 675 to 708 (PKPDCPTSGDSGESSNRRVKRDSYAGVVKRGYTR) is disordered.

Belongs to the orthoreovirus mu-1 protein family. As to quaternary structure, heterohexamer of three sigma-3 and three Mu-1 proteins. In terms of processing, cleaved during the endosomal proteolytic disassembly of the outer capsid. Mu-1 is proteolytically cleaved into mu-1N and mu-1C during the maturation step to generate the ISVP. Cleavage of mu-1 to mu-1C is dependent on myristoylation and binding to sigma-3 protein. Mu-1C is further cleaved into delta (59 kDa), and phi (13 kDa) segments during entry into the host cell cytoplasm. Post-translationally, mu-1 and mu-1N are N-terminally myristoylated. This acylation is essential for the membrane fusion activity.

Its subcellular location is the virion. The protein resides in the host cell membrane. It is found in the host endoplasmic reticulum. The protein localises to the host mitochondrion. Functionally, major outer capsid protein involved in host cell membrane penetration. In the endocytic compartment, outer-capsid protein sigma-3 is removed by cathepsin proteases, which exposes the viral membrane-penetration protein mu-1. Both myristoylated peptides mu-1N and phi are released during infectious subvirion particles (ISVP) formation in the endosome. They associate with host membranes and mu-1N induces permeabilization and delivery of transcriptionally active viral particles into the host cell cytoplasm. Seems to induce apoptosis in the host cell. The viral outer shell polypeptides, of which mu-1 is one, impose structural constraints that prevent elongation of nascent transcripts by the RNA-dependent RNA polymerase lambda-3. The polypeptide is Outer capsid protein mu-1 (M2) (Mammalia (T3D)).